The following is a 272-amino-acid chain: HMP-PP phosphatase (272 aa).

Aspartate 8 acts as the Nucleophile in catalysis. Positions 8, 10, and 212 each coordinate Mg(2+).

The protein belongs to the HAD-like hydrolase superfamily. Cof family. Mg(2+) serves as cofactor.

The enzyme catalyses 4-amino-2-methyl-5-(diphosphooxymethyl)pyrimidine + H2O = 4-amino-2-methyl-5-(phosphooxymethyl)pyrimidine + phosphate + H(+). Functionally, catalyzes the hydrolysis of 4-amino-2-methyl-5-hydroxymethylpyrimidine pyrophosphate (HMP-PP) to 4-amino-2-methyl-5-hydroxymethylpyrimidine phosphate (HMP-P). The protein is HMP-PP phosphatase of Salmonella enteritidis PT4 (strain P125109).